A 2058-amino-acid polypeptide reads, in one-letter code: Unconventional myosin-X (2058 aa).

Met-1 carries the N-acetylmethionine modification. The Myosin motor domain occupies 63–739 (EGVDDMASLT…LEQKLEKRRE (677 aa)). Residues Asn-104, Tyr-113, 160-165 (GAGKTE), and Asn-215 each bind ATP. The interval 619 to 641 (LHSLMATLSSSNPFFVRCIKPNM) is actin-binding. 3 IQ domains span residues 742–763 (VSHA…KQYR), 764–787 (KVLY…RFLH), and 788–817 (LKKA…EKRE). The interval 814-883 (EKREQEEKKK…LTRELEKQKE (70 aa)) is SAH. Disordered stretches follow at residues 819–840 (EEKK…RERE) and 847–866 (ELRA…EALQ). The span at 847-861 (ELRAQQEEETRKQQE) shows a compositional bias: basic and acidic residues. A coiled-coil region spans residues 884–934 (NKQVEEILRLEKEIEDLQRMKEQQELSLTEASLQKLQERRDQELRRLEEEA). 3 positions are modified to phosphoserine: Ser-962, Ser-965, and Ser-968. The interval 964-1090 (GSEFSSELAE…DLPSPDGDYD (127 aa)) is disordered. Residues 989 to 1003 (PEEEVDEGFEADDDA) are compositionally biased toward acidic residues. Polar residues predominate over residues 1040–1049 (VVPTSPSADS). Residues 1060–1071 (SGSLHNSSSGES) show a composition bias toward low complexity. The residue at position 1158 (Thr-1158) is a Phosphothreonine. PH domains lie at 1212-1310 (EALK…QVHA) and 1392-1497 (EFIV…NVTD). The region spanning 1547-1695 (LPYGDINLNL…PSRDEIEALI (149 aa)) is the MyTH4 domain. Residues 1700–2044 (MTSTVYCHGG…AYISMIVKKR (345 aa)) form the FERM domain.

Belongs to the TRAFAC class myosin-kinesin ATPase superfamily. Myosin family. Monomer, when in an inactive conformation in the cytosol. Homodimer in its active, membrane-bound conformation; antiparallel coiled coil-mediated dimer formation. Interacts strongly with CALM3 and weakly with CALM, the CALM3 interaction is essential for function in filopodial extension and motility. Interacts with ECPAS. Interacts with NEO1. Interacts with ITGB1 and ITGB3. Interacts with VASP. Interacts with DCC and ITGB5; the presence of DCC inhibits ITGB5 binding. Interacts with tubulin; ITGB5 or DCC binding inhibits tubulin binding. The initiator methionine for isoform Headless is removed. As to expression, ubiquitous.

It localises to the cytoplasm. The protein localises to the cytosol. The protein resides in the cell projection. It is found in the lamellipodium. Its subcellular location is the ruffle. It localises to the cytoskeleton. The protein localises to the filopodium tip. The protein resides in the cell cortex. It is found in the filopodium membrane. In terms of biological role, myosins are actin-based motor molecules with ATPase activity. Unconventional myosins serve in intracellular movements. MYO10 binds to actin filaments and actin bundles and functions as a plus end-directed motor. Moves with higher velocity and takes larger steps on actin bundles than on single actin filaments. The tail domain binds to membranous compartments containing phosphatidylinositol 3,4,5-trisphosphate or integrins, and mediates cargo transport along actin filaments. Regulates cell shape, cell spreading and cell adhesion. Stimulates the formation and elongation of filopodia. In hippocampal neurons it induces the formation of dendritic filopodia by trafficking the actin-remodeling protein VASP to the tips of filopodia, where it promotes actin elongation. Plays a role in formation of the podosome belt in osteoclasts. Functions as a dominant-negative regulator of isoform 1, suppressing its filopodia-inducing and axon outgrowth-promoting activities. In hippocampal neurons, it increases VASP retention in spine heads to induce spine formation and spine head expansion. This is Unconventional myosin-X (MYO10) from Homo sapiens (Human).